An 80-amino-acid polypeptide reads, in one-letter code: SPI-1 type 3 secretion system needle filament protein (80 aa).

This sequence belongs to the SctF family. As to quaternary structure, the core secretion machinery of the T3SS is composed of approximately 20 different proteins, including cytoplasmic components, a base, an export apparatus and a needle. This subunit polymerizes and forms the helical needle filament. Interacts with the needle tip protein SipD/SctA. Interacts with the needle adapter protein PrgJ/SctI, the secretin InvG/SctC and the minor export apparatus protein SpaP/SctR. In vitro, the needle protomer refolds spontaneously to extend the needle from the distal end.

Its subcellular location is the secreted. The protein localises to the cell surface. With respect to regulation, binding of bile salts, including deoxycholate, to the PrgI:SipD interface may inhibit the T3SS function. Its function is as follows. Component of the type III secretion system (T3SS), also called injectisome, which is used to inject bacterial effector proteins into eukaryotic host cells. PrgI/SctF1 forms the external needle filament that protrudes from the bacterial surface. Is probably involved in the transduction of an activating signal, thought to be mediated by the distal tip of the needle filament, to the secretion machine. Required for invasion of epithelial cells. Required for the secretion of the effector protein SptP. Functionally, during infection, can induce innate immune responses. The needle proteins interact with host TLR2 or TLR4, and induce signaling by NF-kappa-B and/or AP-1. This activation is MyD88 dependent and results in increased expression of cytokines, including TNF-alpha, IL-6 and IL-8. The protein is SPI-1 type 3 secretion system needle filament protein of Salmonella typhimurium (strain LT2 / SGSC1412 / ATCC 700720).